The sequence spans 479 residues: MAQHTVYFPDAFLTQMREAMPSTLSFDDFLAACQRPLRRSIRVNTLKISVADFLQLTAPYGWTLTPIPWCEEGFWIERDNEDALPLGSTAEHLSGLFYIQEASSMLPVAALFADGNAPQRVMDVAAAPGSKTTQISARMNNEGAILANEFSASRVKVLHANISRCGISNVALTHFDGRVFGAAVPEMFDAILLDAPCSGEGVVRKDPDALKNWSPESNQEIAATQRELIDSAFHALRPGGTLVYSTCTLNQEENEAVCLWLKETYPDAVEFLPLGDLFPGANKALTEEGFLHVFPQIYDCEGFFVARLRKTQAIPALPAPKYKVGNFPFSPVKDREAGQIRQAATGVGLNWDENLRLWQRDKELWLFPVGIEALIGKVRFSRLGIKLAETHNKGYRWQHEAVIALASPDNMNAFELTPQEAEEWYRGRDVYPQAAPVADDVLVTFQHQPIGLAKRIGSRLKNSYPRELVRDGKLFTGNA.

Residues 125–131, Glu-149, Asp-176, and Asp-194 each bind S-adenosyl-L-methionine; that span reads AAAPGSK. Cys-247 serves as the catalytic Nucleophile.

This sequence belongs to the class I-like SAM-binding methyltransferase superfamily. RsmB/NOP family.

The protein localises to the cytoplasm. The catalysed reaction is cytidine(1407) in 16S rRNA + S-adenosyl-L-methionine = 5-methylcytidine(1407) in 16S rRNA + S-adenosyl-L-homocysteine + H(+). Its function is as follows. Specifically methylates the cytosine at position 1407 (m5C1407) of 16S rRNA. This is Ribosomal RNA small subunit methyltransferase F (rsmF) from Escherichia coli (strain K12).